The following is a 125-amino-acid chain: MRHYEIILLIHPDQSEQVPAMLERYKGMIVAGGGQVHRVEDWGRRQLAYLINKLAKAHYLCLNIEADQAVMAELEHAFKFNDAVLRHLTVQKKKAETGASSMMKTVEREEARKASQAEFAASNER.

The tract at residues 94–125 (KAETGASSMMKTVEREEARKASQAEFAASNER) is disordered. Residues 105-115 (TVEREEARKAS) show a composition bias toward basic and acidic residues.

This sequence belongs to the bacterial ribosomal protein bS6 family.

Its function is as follows. Binds together with bS18 to 16S ribosomal RNA. The protein is Small ribosomal subunit protein bS6 of Acidovorax ebreus (strain TPSY) (Diaphorobacter sp. (strain TPSY)).